Here is a 359-residue protein sequence, read N- to C-terminus: Protein RecA (359 aa).

G64–T71 is a binding site for ATP. The segment at N328–I359 is disordered. The span at P331 to K344 shows a compositional bias: basic and acidic residues.

It belongs to the RecA family.

The protein localises to the cytoplasm. In terms of biological role, can catalyze the hydrolysis of ATP in the presence of single-stranded DNA, the ATP-dependent uptake of single-stranded DNA by duplex DNA, and the ATP-dependent hybridization of homologous single-stranded DNAs. It interacts with LexA causing its activation and leading to its autocatalytic cleavage. The protein is Protein RecA of Francisella tularensis subsp. novicida (strain U112).